The sequence spans 250 residues: Urease accessory protein UreF (250 aa).

The interval 1–21 (MDEADPGEAEAAQAEAAQDGA) is disordered. Positions 9–21 (AEAAQAEAAQDGA) are enriched in low complexity.

The protein belongs to the UreF family. UreD, UreF and UreG form a complex that acts as a GTP-hydrolysis-dependent molecular chaperone, activating the urease apoprotein by helping to assemble the nickel containing metallocenter of UreC. The UreE protein probably delivers the nickel.

The protein localises to the cytoplasm. Required for maturation of urease via the functional incorporation of the urease nickel metallocenter. The protein is Urease accessory protein UreF of Methylobacterium sp. (strain 4-46).